The sequence spans 157 residues: Transcription elongation factor GreA (157 aa).

This sequence belongs to the GreA/GreB family.

Its function is as follows. Necessary for efficient RNA polymerase transcription elongation past template-encoded arresting sites. The arresting sites in DNA have the property of trapping a certain fraction of elongating RNA polymerases that pass through, resulting in locked ternary complexes. Cleavage of the nascent transcript by cleavage factors such as GreA or GreB allows the resumption of elongation from the new 3'terminus. GreA releases sequences of 2 to 3 nucleotides. In Maricaulis maris (strain MCS10) (Caulobacter maris), this protein is Transcription elongation factor GreA.